The following is a 138-amino-acid chain: ATP synthase epsilon chain (138 aa).

Belongs to the ATPase epsilon chain family. In terms of assembly, F-type ATPases have 2 components, CF(1) - the catalytic core - and CF(0) - the membrane proton channel. CF(1) has five subunits: alpha(3), beta(3), gamma(1), delta(1), epsilon(1). CF(0) has three main subunits: a, b and c.

It is found in the cellular thylakoid membrane. Functionally, produces ATP from ADP in the presence of a proton gradient across the membrane. The polypeptide is ATP synthase epsilon chain (atpC) (Synechococcus sp. (strain PCC 6716)).